The chain runs to 340 residues: Ketol-acid reductoisomerase (NADP(+)) (340 aa).

The 182-residue stretch at 1–182 folds into the KARI N-terminal Rossmann domain; sequence MRVYYDRDCD…GGGRSGIIET (182 aa). NADP(+)-binding positions include 24-27, R48, S51, S53, and 83-86; these read YGSQ and DELQ. The active site involves H108. Residue G134 coordinates NADP(+). A KARI C-terminal knotted domain is found at 183–329; that stretch reads NFRQECETDL…EKLRGMMPWI (147 aa). Mg(2+) contacts are provided by D191, E195, E227, and E231. S252 contributes to the substrate binding site.

The protein belongs to the ketol-acid reductoisomerase family. Requires Mg(2+) as cofactor.

The catalysed reaction is (2R)-2,3-dihydroxy-3-methylbutanoate + NADP(+) = (2S)-2-acetolactate + NADPH + H(+). The enzyme catalyses (2R,3R)-2,3-dihydroxy-3-methylpentanoate + NADP(+) = (S)-2-ethyl-2-hydroxy-3-oxobutanoate + NADPH + H(+). The protein operates within amino-acid biosynthesis; L-isoleucine biosynthesis; L-isoleucine from 2-oxobutanoate: step 2/4. It functions in the pathway amino-acid biosynthesis; L-valine biosynthesis; L-valine from pyruvate: step 2/4. Functionally, involved in the biosynthesis of branched-chain amino acids (BCAA). Catalyzes an alkyl-migration followed by a ketol-acid reduction of (S)-2-acetolactate (S2AL) to yield (R)-2,3-dihydroxy-isovalerate. In the isomerase reaction, S2AL is rearranged via a Mg-dependent methyl migration to produce 3-hydroxy-3-methyl-2-ketobutyrate (HMKB). In the reductase reaction, this 2-ketoacid undergoes a metal-dependent reduction by NADPH to yield (R)-2,3-dihydroxy-isovalerate. This is Ketol-acid reductoisomerase (NADP(+)) from Cereibacter sphaeroides (strain ATCC 17029 / ATH 2.4.9) (Rhodobacter sphaeroides).